The sequence spans 553 residues: Formate--tetrahydrofolate ligase (553 aa).

64–71 provides a ligand contact to ATP; it reads TPAGEGKT.

It belongs to the formate--tetrahydrofolate ligase family.

The catalysed reaction is (6S)-5,6,7,8-tetrahydrofolate + formate + ATP = (6R)-10-formyltetrahydrofolate + ADP + phosphate. Its pathway is one-carbon metabolism; tetrahydrofolate interconversion. This is Formate--tetrahydrofolate ligase from Pseudothermotoga lettingae (strain ATCC BAA-301 / DSM 14385 / NBRC 107922 / TMO) (Thermotoga lettingae).